The chain runs to 364 residues: Chorismate synthase (364 aa).

Arg48 is a binding site for NADP(+). FMN contacts are provided by residues 125–127 (RSS), 237–238 (NA), Gly277, 292–296 (KPTSS), and Arg318.

It belongs to the chorismate synthase family. As to quaternary structure, homotetramer. The cofactor is FMNH2.

It catalyses the reaction 5-O-(1-carboxyvinyl)-3-phosphoshikimate = chorismate + phosphate. Its pathway is metabolic intermediate biosynthesis; chorismate biosynthesis; chorismate from D-erythrose 4-phosphate and phosphoenolpyruvate: step 7/7. Catalyzes the anti-1,4-elimination of the C-3 phosphate and the C-6 proR hydrogen from 5-enolpyruvylshikimate-3-phosphate (EPSP) to yield chorismate, which is the branch point compound that serves as the starting substrate for the three terminal pathways of aromatic amino acid biosynthesis. This reaction introduces a second double bond into the aromatic ring system. The sequence is that of Chorismate synthase from Albidiferax ferrireducens (strain ATCC BAA-621 / DSM 15236 / T118) (Rhodoferax ferrireducens).